The sequence spans 234 residues: 3-dehydroquinate dehydratase (234 aa).

3-dehydroquinate is bound by residues 33–35 (EWR) and Arg-68. Residue His-124 is the Proton donor/acceptor of the active site. Catalysis depends on Lys-151, which acts as the Schiff-base intermediate with substrate. 3-dehydroquinate-binding residues include Arg-193, Ser-214, and Gln-218.

It belongs to the type-I 3-dehydroquinase family. In terms of assembly, homodimer.

The enzyme catalyses 3-dehydroquinate = 3-dehydroshikimate + H2O. It participates in metabolic intermediate biosynthesis; chorismate biosynthesis; chorismate from D-erythrose 4-phosphate and phosphoenolpyruvate: step 3/7. Involved in the third step of the chorismate pathway, which leads to the biosynthesis of aromatic amino acids. Catalyzes the cis-dehydration of 3-dehydroquinate (DHQ) and introduces the first double bond of the aromatic ring to yield 3-dehydroshikimate. The polypeptide is 3-dehydroquinate dehydratase (Syntrophobacter fumaroxidans (strain DSM 10017 / MPOB)).